Reading from the N-terminus, the 363-residue chain is tRNA/tmRNA (uracil-C(5))-methyltransferase (363 aa).

5 residues coordinate S-adenosyl-L-methionine: Gln-187, Tyr-215, Asn-220, Glu-236, and Asp-296. The active-site Nucleophile is the Cys-321. The Proton acceptor role is filled by Glu-355.

This sequence belongs to the class I-like SAM-binding methyltransferase superfamily. RNA M5U methyltransferase family. TrmA subfamily.

The catalysed reaction is uridine(54) in tRNA + S-adenosyl-L-methionine = 5-methyluridine(54) in tRNA + S-adenosyl-L-homocysteine + H(+). The enzyme catalyses uridine(341) in tmRNA + S-adenosyl-L-methionine = 5-methyluridine(341) in tmRNA + S-adenosyl-L-homocysteine + H(+). Dual-specificity methyltransferase that catalyzes the formation of 5-methyluridine at position 54 (m5U54) in all tRNAs, and that of position 341 (m5U341) in tmRNA (transfer-mRNA). This Pseudomonas fluorescens protein is tRNA/tmRNA (uracil-C(5))-methyltransferase.